The sequence spans 181 residues: Mitochondrial inner membrane protein Mpv17 (181 aa).

4 consecutive transmembrane segments (helical) span residues 20 to 37 (MCIA…AQYL), 51 to 67 (FSFL…FIWF), 86 to 103 (LCID…AILF), and 152 to 169 (VILN…LSYI).

It belongs to the peroxisomal membrane protein PXMP2/4 family.

It localises to the mitochondrion inner membrane. Involved in mitochondria homeostasis. The protein is Mitochondrial inner membrane protein Mpv17 of Caenorhabditis elegans.